The chain runs to 225 residues: Transcriptional regulatory protein CssR (225 aa).

One can recognise a Response regulatory domain in the interval 4 to 117 (TIYLVEDEDN…ELIIRVQKLL (114 aa)). Position 52 is a 4-aspartylphosphate (aspartate 52). The segment at residues 129-224 (KNEIAVSSYR…IYGFGYRMMS (96 aa)) is a DNA-binding region (ompR/PhoB-type).

Phosphorylated by CssS.

It is found in the cytoplasm. In terms of biological role, member of the two-component regulatory system CssS/CssR required to control the cellular response to secretion stress. The sequence is that of Transcriptional regulatory protein CssR (cssR) from Bacillus subtilis (strain 168).